A 111-amino-acid polypeptide reads, in one-letter code: Nucleoid-associated protein PFL_1905 (111 aa).

Disordered stretches follow at residues 1-20 (MKGG…EKMA) and 88-111 (SNSQ…KLPF).

Belongs to the YbaB/EbfC family. In terms of assembly, homodimer.

The protein localises to the cytoplasm. The protein resides in the nucleoid. In terms of biological role, binds to DNA and alters its conformation. May be involved in regulation of gene expression, nucleoid organization and DNA protection. In Pseudomonas fluorescens (strain ATCC BAA-477 / NRRL B-23932 / Pf-5), this protein is Nucleoid-associated protein PFL_1905.